Consider the following 351-residue polypeptide: Polyribonucleotide 5'-hydroxyl-kinase TK1956 (351 aa).

34–41 provides a ligand contact to ATP; the sequence is GGVDSGKS.

A divalent metal cation serves as cofactor.

The catalysed reaction is a 5'-end dephospho-2'-deoxyribonucleoside-DNA + ATP = a 5'-end 5'-phospho-2'-deoxyribonucleoside-DNA + ADP + H(+). It carries out the reaction a 5'-end dephospho-ribonucleoside-RNA + ATP = a 5'-end 5'-phospho-ribonucleoside-RNA + ADP + H(+). Its function is as follows. Polynucleotide kinase that can phosphorylate the 5'-hydroxyl groups of both single-stranded RNA (ssRNA) and single-stranded DNA (ssDNA). Exhibits a strong preference for ssRNA. The chain is Polyribonucleotide 5'-hydroxyl-kinase TK1956 from Thermococcus kodakarensis (strain ATCC BAA-918 / JCM 12380 / KOD1) (Pyrococcus kodakaraensis (strain KOD1)).